Here is a 246-residue protein sequence, read N- to C-terminus: DNA polymerase sliding clamp (246 aa).

The protein belongs to the PCNA family. As to quaternary structure, homotrimer. The subunits circularize to form a toroid; DNA passes through its center. Replication factor C (RFC) is required to load the toroid on the DNA.

Its function is as follows. Sliding clamp subunit that acts as a moving platform for DNA processing. Responsible for tethering the catalytic subunit of DNA polymerase and other proteins to DNA during high-speed replication. The sequence is that of DNA polymerase sliding clamp from Methanocella arvoryzae (strain DSM 22066 / NBRC 105507 / MRE50).